The sequence spans 537 residues: Putative cysteine ligase BshC (537 aa).

The stretch at 415-439 (EKASNNFINEVEEMKIQQQELYNNL) forms a coiled coil.

Belongs to the BshC family.

Its function is as follows. Involved in bacillithiol (BSH) biosynthesis. May catalyze the last step of the pathway, the addition of cysteine to glucosamine malate (GlcN-Mal) to generate BSH. The sequence is that of Putative cysteine ligase BshC from Staphylococcus epidermidis (strain ATCC 12228 / FDA PCI 1200).